Here is a 119-residue protein sequence, read N- to C-terminus: Small ribosomal subunit protein uS10 (119 aa).

Residue Ala-2 is modified to N-acetylalanine. Lys-4 is covalently cross-linked (Glycyl lysine isopeptide (Lys-Gly) (interchain with G-Cter in ubiquitin)). An N6-succinyllysine; alternate modification is found at Lys-8. Lys-8 participates in a covalent cross-link: Glycyl lysine isopeptide (Lys-Gly) (interchain with G-Cter in ubiquitin); alternate. Thr-9 is subject to Phosphothreonine. N6-acetyllysine occurs at positions 34 and 75. Ser-93 carries the post-translational modification Phosphoserine.

Belongs to the universal ribosomal protein uS10 family. Component of the 40S small ribosomal subunit. In terms of processing, polyubiquitinated by ZNF598 via 'Lys-63'-linked ubiquitin chains when a ribosome has stalled, initiating the ribosome quality control (RQC) pathway to degrade the potentially detrimental aberrant nascent polypeptide. Deubiquitinated by OTUD3 and USP21, antagonizing ZNF598 activity. Ufmylated by UFL1.

Its subcellular location is the cytoplasm. In terms of biological role, component of the small ribosomal subunit. The ribosome is a large ribonucleoprotein complex responsible for the synthesis of proteins in the cell. The polypeptide is Small ribosomal subunit protein uS10 (Rps20) (Rattus norvegicus (Rat)).